The chain runs to 525 residues: GMP synthase [glutamine-hydrolyzing] (525 aa).

In terms of domain architecture, Glutamine amidotransferase type-1 spans 8 to 207 (KILILDFGSQ…ALDICGCAAN (200 aa)). C85 functions as the Nucleophile in the catalytic mechanism. Catalysis depends on residues H181 and E183. The GMPS ATP-PPase domain maps to 208-400 (WKPSSIIEDA…LGLPYNMLYR (193 aa)). 235-241 (SGGVDSS) is an ATP binding site.

As to quaternary structure, homodimer.

The enzyme catalyses XMP + L-glutamine + ATP + H2O = GMP + L-glutamate + AMP + diphosphate + 2 H(+). Its pathway is purine metabolism; GMP biosynthesis; GMP from XMP (L-Gln route): step 1/1. Catalyzes the synthesis of GMP from XMP. In Shewanella oneidensis (strain ATCC 700550 / JCM 31522 / CIP 106686 / LMG 19005 / NCIMB 14063 / MR-1), this protein is GMP synthase [glutamine-hydrolyzing].